Reading from the N-terminus, the 475-residue chain is tRNA-2-methylthio-N(6)-dimethylallyladenosine synthase (475 aa).

Positions 2–119 (AKLHITTWGC…LPEMINKIRG (118 aa)) constitute an MTTase N-terminal domain. Residues Cys-11, Cys-48, Cys-82, Cys-156, Cys-160, and Cys-163 each coordinate [4Fe-4S] cluster. The region spanning 142 to 374 (RAEGPTAFVS…QQRINHQAMQ (233 aa)) is the Radical SAM core domain. The TRAM domain maps to 377–440 (RAMLGTEQRV…TNSLRGDVVR (64 aa)).

This sequence belongs to the methylthiotransferase family. MiaB subfamily. Monomer. [4Fe-4S] cluster is required as a cofactor.

Its subcellular location is the cytoplasm. It carries out the reaction N(6)-dimethylallyladenosine(37) in tRNA + (sulfur carrier)-SH + AH2 + 2 S-adenosyl-L-methionine = 2-methylsulfanyl-N(6)-dimethylallyladenosine(37) in tRNA + (sulfur carrier)-H + 5'-deoxyadenosine + L-methionine + A + S-adenosyl-L-homocysteine + 2 H(+). Catalyzes the methylthiolation of N6-(dimethylallyl)adenosine (i(6)A), leading to the formation of 2-methylthio-N6-(dimethylallyl)adenosine (ms(2)i(6)A) at position 37 in tRNAs that read codons beginning with uridine. This chain is tRNA-2-methylthio-N(6)-dimethylallyladenosine synthase, found in Actinobacillus pleuropneumoniae serotype 5b (strain L20).